The sequence spans 300 residues: Tyrosine recombinase XerC (300 aa).

The 86-residue stretch at 1–86 folds into the Core-binding (CB) domain; sequence MESVLDAFDQ…AVKTFTAWAV (86 aa). The region spanning 107–294 is the Tyr recombinase domain; it reads TLPAVLRQDQ…TVARLRAVHD (188 aa). Active-site residues include Arg151, Lys175, His246, Arg249, and His272. Catalysis depends on Tyr281, which acts as the O-(3'-phospho-DNA)-tyrosine intermediate.

This sequence belongs to the 'phage' integrase family. XerC subfamily. As to quaternary structure, forms a cyclic heterotetrameric complex composed of two molecules of XerC and two molecules of XerD.

Its subcellular location is the cytoplasm. Site-specific tyrosine recombinase, which acts by catalyzing the cutting and rejoining of the recombining DNA molecules. The XerC-XerD complex is essential to convert dimers of the bacterial chromosome into monomers to permit their segregation at cell division. It also contributes to the segregational stability of plasmids. In Mycobacterium sp. (strain JLS), this protein is Tyrosine recombinase XerC.